The following is a 233-amino-acid chain: MGQKVHPTGIRLGISKPWVSTWYASSKDFSAQLFGDHKVRTFLTKELKTASVSKIVIERPAKSIRVTIHTARPGVVIGKKGEDVEKLRQAVTKIAGVPAQINISEVRKPELDAQLVADGIASQLERRVMFRRAMKRSVQNAMRIGSKGIKVEVSGRLGGAEIARTEWYREGRVPLHTLRADIDYATSEALTTYGIIGVKVWIFKGEVIGGLPLVQEQEKPAKRAPKKAKKSAK.

In terms of domain architecture, KH type-2 spans 39–107; that stretch reads VRTFLTKELK…PAQINISEVR (69 aa).

The protein belongs to the universal ribosomal protein uS3 family. In terms of assembly, part of the 30S ribosomal subunit. Forms a tight complex with proteins S10 and S14.

Functionally, binds the lower part of the 30S subunit head. Binds mRNA in the 70S ribosome, positioning it for translation. This is Small ribosomal subunit protein uS3 from Pseudoalteromonas translucida (strain TAC 125).